Here is a 205-residue protein sequence, read N- to C-terminus: MSAIAPGMILIAYLCGSISSAILVCRLCGLPDPRTSGSGNPGATNVLRIGGKGAAVAVLIFDVLKGMLPVWGAYELGVSPFWLGLIAIAACLGHIWPVFFGFKGGKGVATAFGAIAPIGWDLTGVMAGTWLLTVLLSGYSSLGAIVSALIAPFYVWWFKPQFTFPVSMLSCLILLRHHDNIQRLWRRQETKIWTKFKRKREKDPE.

Topologically, residues 1-3 are periplasmic; it reads MSA. A helical transmembrane segment spans residues 4–24; it reads IAPGMILIAYLCGSISSAILV. Over 25–52 the chain is Cytoplasmic; it reads CRLCGLPDPRTSGSGNPGATNVLRIGGK. A helical transmembrane segment spans residues 53-73; the sequence is GAAVAVLIFDVLKGMLPVWGA. Over 74–80 the chain is Periplasmic; the sequence is YELGVSP. A helical membrane pass occupies residues 81 to 101; it reads FWLGLIAIAACLGHIWPVFFG. Residues 102–111 lie on the Cytoplasmic side of the membrane; the sequence is FKGGKGVATA. Residues 112-132 traverse the membrane as a helical segment; sequence FGAIAPIGWDLTGVMAGTWLL. At 133–137 the chain is on the periplasmic side; the sequence is TVLLS. Residues 138–158 form a helical membrane-spanning segment; that stretch reads GYSSLGAIVSALIAPFYVWWF. The Cytoplasmic segment spans residues 159–205; the sequence is KPQFTFPVSMLSCLILLRHHDNIQRLWRRQETKIWTKFKRKREKDPE.

Belongs to the PlsY family. Probably interacts with PlsX.

The protein resides in the cell inner membrane. It carries out the reaction sn-glycerol 3-phosphate + an acyl-CoA = a 1-acyl-sn-glycero-3-phosphate + CoA. It catalyses the reaction a fatty acyl-[ACP] + sn-glycerol 3-phosphate = a 1-acyl-sn-glycero-3-phosphate + holo-[ACP]. It functions in the pathway lipid metabolism; phospholipid metabolism. Its function is as follows. Catalyzes the transfer of an acyl group from acyl-ACP to glycerol-3-phosphate (G3P) to form lysophosphatidic acid (LPA). This enzyme can also utilize acyl-CoA as fatty acyl donor, but not acyl-PO(4). The sequence is that of Glycerol-3-phosphate acyltransferase from Escherichia coli O8 (strain IAI1).